The sequence spans 155 residues: RNA pyrophosphohydrolase (155 aa).

Residues Lys-5–Ala-147 form the Nudix hydrolase domain. The short motif at Gly-42–Gly-63 is the Nudix box element.

The protein belongs to the Nudix hydrolase family. RppH subfamily. Requires a divalent metal cation as cofactor.

Accelerates the degradation of transcripts by removing pyrophosphate from the 5'-end of triphosphorylated RNA, leading to a more labile monophosphorylated state that can stimulate subsequent ribonuclease cleavage. In Helicobacter pylori (strain P12), this protein is RNA pyrophosphohydrolase.